Reading from the N-terminus, the 411-residue chain is Diels-Alderase ffsF (411 aa).

The first 17 residues, 1–17, serve as a signal peptide directing secretion; it reads MTQIKLLLLSLAITAQS.

Belongs to the Diels-Alderase family.

Its pathway is mycotoxin biosynthesis. In terms of biological role, diels-Alderase; part of the gene cluster that mediates the biosynthesis of the cytotoxic leucine-containing cytochalasans, including aspochalasin C, aspochalasin E, TMC-169, flavichalasine F, aspergillin PZ, aspochalasin M and flavichalasine G. The first step in the pathway is catalyzed by the hybrid PKS-NRPS ffsA that utilizes 8 units of malonyl-CoA to iteratively assemble the octaketide chain before addition of L-leucine by the C-terminal NRPS modules. Because ffsA lacks a designated enoylreductase (ER) domain, the required activity is provided the enoyl reductase fssC. The methyltransferase (MT) domain of ffsA catalyzes the alpha-methylation at C10 and C14 using S-adenosyl-L-methionine as the methyl-donating cosubstrate. Reduction by the hydrolyase ffsE, followed by dehydration and intra-molecular Diels-Alder cyclization by the Diels-Alderase ffsF then yield the required isoindolone-fused macrocycle. A number of oxidative steps catalyzed by the tailoring cytochrome P450 monooxygenase ffsD, the FAD-linked oxidoreductase ffsJ and the short-chain dehydrogenase/reductase ffsI, are further required to afford the final products. This Aspergillus flavipes protein is Diels-Alderase ffsF.